The sequence spans 226 residues: tRNA (guanine-N(7)-)-methyltransferase (226 aa).

S-adenosyl-L-methionine-binding residues include Glu-57, Glu-82, Asp-109, and Asp-132. Residue Asp-132 is part of the active site. Substrate is bound by residues Lys-136, Asp-168, and 205–208 (TKFE).

Belongs to the class I-like SAM-binding methyltransferase superfamily. TrmB family.

It catalyses the reaction guanosine(46) in tRNA + S-adenosyl-L-methionine = N(7)-methylguanosine(46) in tRNA + S-adenosyl-L-homocysteine. It participates in tRNA modification; N(7)-methylguanine-tRNA biosynthesis. In terms of biological role, catalyzes the formation of N(7)-methylguanine at position 46 (m7G46) in tRNA. The chain is tRNA (guanine-N(7)-)-methyltransferase from Legionella pneumophila subsp. pneumophila (strain Philadelphia 1 / ATCC 33152 / DSM 7513).